An 827-amino-acid polypeptide reads, in one-letter code: Striatin homolog (827 aa).

Residues 37–109 (RAHWISEKAE…VEEEEEEDDK (73 aa)) are a coiled coil. 4 disordered regions span residues 99-123 (KVEE…SKDN), 181-270 (KDIN…QLQS), 311-362 (SSVS…DEQS), and 400-459 (EEGN…SELM). A compositionally biased stretch (basic and acidic residues) spans 109 to 123 (KIPKNREPPKKSKDN). Composition is skewed to low complexity over residues 184-270 (NNNN…QLQS) and 311-334 (SSVS…TSKQ). Residues 337-346 (EDPNNVTISK) show a composition bias toward polar residues. Low complexity-rich tracts occupy residues 347-356 (QQQQEQQQQQ), 416-432 (TPTT…STGS), and 439-453 (SSSS…NSNT). 6 WD repeats span residues 495 to 534 (SHFD…PTKK), 548 to 593 (GHTG…IDSY), 610 to 649 (GHQD…QLYT), 709 to 748 (NNNS…VVHS), 751 to 790 (AHSN…CIQD), and 797 to 827 (KYDE…RILN).

The protein belongs to the WD repeat striatin family. In terms of assembly, part of the core of STRIPAK complexes.

Its subcellular location is the cytoplasm. The protein resides in the membrane. In terms of biological role, calmodulin-binding scaffolding protein which is the center of the striatin-interacting phosphatase and kinase (STRIPAK) complexes. STRIPAK complexes have critical roles in protein (de)phosphorylation and are regulators of multiple signaling pathways including Hippo, MAPK, nuclear receptor and cytoskeleton remodeling. Different types of STRIPAK complexes are involved in a variety of biological processes such as cell growth, differentiation, apoptosis, metabolism and immune regulation. The protein is Striatin homolog (strn) of Dictyostelium discoideum (Social amoeba).